The following is a 325-amino-acid chain: Serpentine receptor class delta-59 (325 aa).

Transmembrane regions (helical) follow at residues 14 to 34 (WYWP…LHLI), 45 to 65 (LKIF…FAFL), 75 to 95 (ISAA…TCFI), 97 to 117 (YHVF…TVLF), 132 to 152 (TYIM…IPFT), 190 to 210 (FLSA…GCLI), 235 to 255 (TLIH…IPSF), and 275 to 295 (ILVS…YFIV).

Belongs to the nematode receptor-like protein srd family.

The protein resides in the membrane. This chain is Serpentine receptor class delta-59 (srd-59), found in Caenorhabditis elegans.